The following is a 294-amino-acid chain: Cytidine deaminase (294 aa).

CMP/dCMP-type deaminase domains lie at 48-168 (DEDA…FGPK) and 186-294 (LTGD…VLLG). 89–91 (NME) contacts substrate. Zn(2+) is bound at residue histidine 102. Glutamate 104 serves as the catalytic Proton donor. The Zn(2+) site is built by cysteine 129 and cysteine 132.

It belongs to the cytidine and deoxycytidylate deaminase family. As to quaternary structure, homodimer. Zn(2+) is required as a cofactor.

The enzyme catalyses cytidine + H2O + H(+) = uridine + NH4(+). The catalysed reaction is 2'-deoxycytidine + H2O + H(+) = 2'-deoxyuridine + NH4(+). In terms of biological role, this enzyme scavenges exogenous and endogenous cytidine and 2'-deoxycytidine for UMP synthesis. The protein is Cytidine deaminase of Salmonella dublin (strain CT_02021853).